A 658-amino-acid chain; its full sequence is Endoglin (658 aa).

A signal peptide spans methionine 1–alanine 25. Residues glutamate 26–threonine 46 form an OR1, N-terminal part region. The interval glutamate 26 to serine 337 is required for interaction with GDF2. Residues glutamate 26–glycine 586 lie on the Extracellular side of the membrane. Disulfide bonds link cysteine 30–cysteine 207, cysteine 53–cysteine 182, cysteine 242–cysteine 330, cysteine 350–cysteine 382, cysteine 363–cysteine 442, cysteine 394–cysteine 412, and cysteine 493–cysteine 549. Positions serine 47–arginine 199 are OR2. Asparagine 88, asparagine 102, asparagine 121, and asparagine 134 each carry an N-linked (GlcNAc...) asparagine glycan. The OR1, C-terminal part stretch occupies residues threonine 200–cysteine 330. Residues glutamine 270–phenylalanine 282 form an essential for interaction with GDF2 region. N-linked (GlcNAc...) asparagine glycosylation is present at asparagine 307. Residues cysteine 363–leucine 533 enclose the ZP domain. The short motif at arginine 399–aspartate 401 is the Cell attachment site element. Residues leucine 587–tryptophan 611 form a helical membrane-spanning segment. Residues tyrosine 612–alanine 658 lie on the Cytoplasmic side of the membrane. Positions valine 626–serine 639 are enriched in low complexity. The disordered stretch occupies residues valine 626 to alanine 658. Residues threonine 640–alanine 658 show a composition bias toward polar residues. Serine 646 and serine 649 each carry phosphoserine; by TGFBR1.

As to quaternary structure, homodimer; disulfide-linked. Forms a heteromeric complex with the signaling receptors for transforming growth factor-beta: TGFBR1 and/or TGFBR2. It is able to bind TGFB1 and TGFB2 with high affinity, but not TGFB3. Interacts with GDF2, forming a heterotetramer with a 2:2 stoichiometry. Interacts with ACVRL1. Can form a heteromeric complex with GDF2 and ACVRL1. Interacts with BMP10. Interacts with DYNLT4. Interacts with ARRB2. Detected on umbilical veil endothelial cells. Detected in placenta (at protein level). Detected on endothelial cells.

It is found in the cell membrane. Vascular endothelium glycoprotein that plays an important role in the regulation of angiogenesis. Required for normal structure and integrity of adult vasculature. Regulates the migration of vascular endothelial cells. Required for normal extraembryonic angiogenesis and for embryonic heart development. May regulate endothelial cell shape changes in response to blood flow, which drive vascular remodeling and establishment of normal vascular morphology during angiogenesis. May play a critical role in the binding of endothelial cells to integrins and/or other RGD receptors. Acts as a TGF-beta coreceptor and is involved in the TGF-beta/BMP signaling cascade that ultimately leads to the activation of SMAD transcription factors. Required for GDF2/BMP9 signaling through SMAD1 in endothelial cells and modulates TGFB1 signaling through SMAD3. The protein is Endoglin (ENG) of Homo sapiens (Human).